The sequence spans 457 residues: MLSAALRRRVLAPTHSALRTGFAAHVVRHYASFPEHQVIKMPALSPTMQAGNIGAWQKKPGDSIAPGDVLVEIETDKAQMDFEFQEEGVIAKILKDAGEKDIPVGSPIAVLVEEGTDISAFEKFSIEDAGGDAAKPAAPKKEEKSESKSESASAPEPTPEPQQYQSQGRLQTALDRLPNISASAKRLAREKGISIDGLKGTGKNGQITEEDVKKAISSPAASSAPSATYEDIPISGMRKTIANRLVESTQTNPHFYVTSSISVSKLLKLRQALNSSADGKYKLSVNDFLIKAIAVASRKVPQVNSSWRDGNIRQFNNVDVSVAVSTPTGLITPIVTGVEGRGLEAISSQVKSLAKKARDGKLKPEEYQGGTISISNMGMNPAVDHFTAVINPPQAAILAVGTTKKVAIPAENEAGVEFDDQITLTASFDHKVVDGAVGAEWLKELKQVLENPLELLL.

A mitochondrion-targeting transit peptide spans 1–30 (MLSAALRRRVLAPTHSALRTGFAAHVVRHY). A Lipoyl-binding domain is found at 36-112 (HQVIKMPALS…PVGSPIAVLV (77 aa)). The residue at position 77 (lysine 77) is an N6-lipoyllysine. The tract at residues 129–168 (AGGDAAKPAAPKKEEKSESKSESASAPEPTPEPQQYQSQG) is disordered. Residues 139–149 (PKKEEKSESKS) show a composition bias toward basic and acidic residues. At lysine 148 the chain carries N6-crotonyllysine. The region spanning 179–216 (NISASAKRLAREKGISIDGLKGTGKNGQITEEDVKKAI) is the Peripheral subunit-binding (PSBD) domain. Catalysis depends on residues histidine 430 and aspartate 434.

Belongs to the 2-oxoacid dehydrogenase family. Eukaryotic pyruvate dehydrogenase (PDH) complexes are organized as a core consisting of the oligomeric dihydrolipoamide acetyl-transferase (E2), around which are arranged multiple copies of pyruvate dehydrogenase (E1), dihydrolipoamide dehydrogenase (E3) and protein X (E3BP) bound by non-covalent bonds. Interacts with SIR5; the interaction is direct. Requires (R)-lipoate as cofactor. Decrotonylated at 'Lys-148' by SIR5, which inhibits the activity of the pyruvate dehydrogenase complex (PDC).

The protein localises to the mitochondrion matrix. It catalyses the reaction N(6)-[(R)-dihydrolipoyl]-L-lysyl-[protein] + acetyl-CoA = N(6)-[(R)-S(8)-acetyldihydrolipoyl]-L-lysyl-[protein] + CoA. Its function is as follows. The pyruvate dehydrogenase complex catalyzes the overall conversion of pyruvate to acetyl-CoA and CO(2). High pyruvate dehydrogenase complex activity is required for sufficient energy production during germination of conidia. The sequence is that of Dihydrolipoyllysine-residue acetyltransferase component of pyruvate dehydrogenase complex, mitochondrial from Fusarium oxysporum f. sp. lycopersici (strain 4287 / CBS 123668 / FGSC 9935 / NRRL 34936) (Fusarium vascular wilt of tomato).